The following is a 670-amino-acid chain: Receptor for retinol uptake stra6 (670 aa).

Topologically, residues 1–38 (MSAETVNNYDYSDWYENAAPTKAPVEVIPPCDPTADEG) are extracellular. Residues 39 to 59 (LFHICIAAISLVVMLVLAILA) traverse the membrane as a helical segment. At 60 to 87 (RRQKLSDNQRGLTGLLSPVNFLDHTQHK) the chain is on the cytoplasmic side. A helical membrane pass occupies residues 88–108 (GLAVAVYGVLFCKLVGMVLSH). Residues 109-121 (HPLPFTKEVANKE) lie on the Extracellular side of the membrane. Residues 122-142 (FWMILALLYYPALYYPLLACG) traverse the membrane as a helical segment. The Cytoplasmic segment spans residues 143-145 (TLH). Residues 146–166 (NKVGYVLGSLLSWTHFGILVW) traverse the membrane as a helical segment. The Extracellular portion of the chain corresponds to 167-182 (QKVDCPKTPQIYKYYA). The helical transmembrane segment at 183 to 203 (LFGSLPQIACLAFLSFQYPLL) threads the bilayer. Over 204–274 (LFKGLQNTET…PEDVFRFPLK (71 aa)) the chain is Cytoplasmic. The helical transmembrane segment at 275–295 (LAISVVVAFIALYQMALLLIS) threads the bilayer. Topologically, residues 296 to 346 (GVLPTLHIVRRGVDENIAFLLAGFNIILSNDRQEVVRIVVYYLWCVEICYV) are extracellular. A helical transmembrane segment spans residues 347–367 (SAVTLSCLVNLLMLMRSMVLH). Topologically, residues 368–401 (RSNLKGLYRGDSLNVFNCHRSIRPSRPALVCWMG) are cytoplasmic. A helical membrane pass occupies residues 402 to 422 (FTSYQAAFLCLGMAIQTLVFF). At 423–452 (ICILFAVFLIIIPILWGTNLMLFHIIGNLW) the chain is on the extracellular side. A helical transmembrane segment spans residues 453–473 (PFWLTLVLAALIQHVASRFLF). The Cytoplasmic segment spans residues 474–488 (IRKDGGTRDLNNRGS). An intramembrane region (helical) is located at residues 489–526 (LFLLSYILFLVNVMIGVVLGIWRVVITALFNIVHLGRL). At 527–670 (DISLLNRNVE…KEAESAAASN (144 aa)) the chain is on the cytoplasmic side. Residues 600-626 (VSNAKRARAHWQLLYTLVNNPSLVGSR) form an interaction with calmodulin region. Residues 640–670 (GALSRTSKEGSKKDGSVNEPSKEAESAAASN) are disordered. The span at 645-664 (TSKEGSKKDGSVNEPSKEAE) shows a compositional bias: basic and acidic residues.

In terms of assembly, homodimer. Interacts (via C-terminus) with calmodulin.

It localises to the cell membrane. In terms of biological role, retinol transporter. Accepts retinol from the extracellular retinol-binding protein rbp4, mediates retinol transport across the cell membrane, and then transmits retinol to the cytoplasmic retinol-binding protein rbp1. Required for normal vitamin A homeostasis. The sequence is that of Receptor for retinol uptake stra6 from Danio rerio (Zebrafish).